Reading from the N-terminus, the 138-residue chain is Large ribosomal subunit protein uL16 (138 aa).

A compositionally biased stretch (basic residues) spans 1 to 18; sequence MALMPKRVKHRKSQRGRI. Residues 1-21 form a disordered region; it reads MALMPKRVKHRKSQRGRIKGN.

The protein belongs to the universal ribosomal protein uL16 family. Part of the 50S ribosomal subunit.

Functionally, binds 23S rRNA and is also seen to make contacts with the A and possibly P site tRNAs. The sequence is that of Large ribosomal subunit protein uL16 from Rhodopirellula baltica (strain DSM 10527 / NCIMB 13988 / SH1).